The sequence spans 158 residues: 6,7-dimethyl-8-ribityllumazine synthase (158 aa).

5-amino-6-(D-ribitylamino)uracil contacts are provided by residues Phe22, 56–58, and 80–82; these read ALE and VVI. 85 to 86 contacts (2S)-2-hydroxy-3-oxobutyl phosphate; it reads ET. Residue His88 is the Proton donor of the active site. Position 113 (Asn113) interacts with 5-amino-6-(D-ribitylamino)uracil. Residue Arg127 coordinates (2S)-2-hydroxy-3-oxobutyl phosphate.

Belongs to the DMRL synthase family.

It carries out the reaction (2S)-2-hydroxy-3-oxobutyl phosphate + 5-amino-6-(D-ribitylamino)uracil = 6,7-dimethyl-8-(1-D-ribityl)lumazine + phosphate + 2 H2O + H(+). It participates in cofactor biosynthesis; riboflavin biosynthesis; riboflavin from 2-hydroxy-3-oxobutyl phosphate and 5-amino-6-(D-ribitylamino)uracil: step 1/2. In terms of biological role, catalyzes the formation of 6,7-dimethyl-8-ribityllumazine by condensation of 5-amino-6-(D-ribitylamino)uracil with 3,4-dihydroxy-2-butanone 4-phosphate. This is the penultimate step in the biosynthesis of riboflavin. The chain is 6,7-dimethyl-8-ribityllumazine synthase from Neisseria meningitidis serogroup C (strain 053442).